Here is a 246-residue protein sequence, read N- to C-terminus: Bis(5'-nucleosyl)-tetraphosphatase PrpE [asymmetrical] (246 aa).

It belongs to the PrpE family. It depends on Ni(2+) as a cofactor.

The catalysed reaction is P(1),P(4)-bis(5'-guanosyl) tetraphosphate + H2O = GMP + GTP + 2 H(+). Asymmetrically hydrolyzes Ap4p to yield AMP and ATP. This is Bis(5'-nucleosyl)-tetraphosphatase PrpE [asymmetrical] from Bacillus thuringiensis subsp. konkukian (strain 97-27).